The following is a 396-amino-acid chain: Tryptophan synthase beta chain (396 aa).

Residue Lys-88 is modified to N6-(pyridoxal phosphate)lysine.

It belongs to the TrpB family. In terms of assembly, tetramer of two alpha and two beta chains. Requires pyridoxal 5'-phosphate as cofactor.

The enzyme catalyses (1S,2R)-1-C-(indol-3-yl)glycerol 3-phosphate + L-serine = D-glyceraldehyde 3-phosphate + L-tryptophan + H2O. It functions in the pathway amino-acid biosynthesis; L-tryptophan biosynthesis; L-tryptophan from chorismate: step 5/5. The beta subunit is responsible for the synthesis of L-tryptophan from indole and L-serine. The chain is Tryptophan synthase beta chain from Shewanella putrefaciens (strain CN-32 / ATCC BAA-453).